The sequence spans 140 residues: Nucleoside diphosphate kinase (140 aa).

Residues lysine 11, phenylalanine 59, arginine 87, threonine 93, arginine 104, and asparagine 114 each contribute to the ATP site. The Pros-phosphohistidine intermediate role is filled by histidine 117.

This sequence belongs to the NDK family. In terms of assembly, homotetramer. Requires Mg(2+) as cofactor.

Its subcellular location is the cytoplasm. It catalyses the reaction a 2'-deoxyribonucleoside 5'-diphosphate + ATP = a 2'-deoxyribonucleoside 5'-triphosphate + ADP. The enzyme catalyses a ribonucleoside 5'-diphosphate + ATP = a ribonucleoside 5'-triphosphate + ADP. In terms of biological role, major role in the synthesis of nucleoside triphosphates other than ATP. The ATP gamma phosphate is transferred to the NDP beta phosphate via a ping-pong mechanism, using a phosphorylated active-site intermediate. This is Nucleoside diphosphate kinase from Gluconobacter oxydans (strain 621H) (Gluconobacter suboxydans).